A 258-amino-acid polypeptide reads, in one-letter code: Imidazole glycerol phosphate synthase subunit HisF (258 aa).

Residues D11 and D130 contribute to the active site.

It belongs to the HisA/HisF family. Heterodimer of HisH and HisF.

The protein resides in the cytoplasm. The enzyme catalyses 5-[(5-phospho-1-deoxy-D-ribulos-1-ylimino)methylamino]-1-(5-phospho-beta-D-ribosyl)imidazole-4-carboxamide + L-glutamine = D-erythro-1-(imidazol-4-yl)glycerol 3-phosphate + 5-amino-1-(5-phospho-beta-D-ribosyl)imidazole-4-carboxamide + L-glutamate + H(+). The protein operates within amino-acid biosynthesis; L-histidine biosynthesis; L-histidine from 5-phospho-alpha-D-ribose 1-diphosphate: step 5/9. IGPS catalyzes the conversion of PRFAR and glutamine to IGP, AICAR and glutamate. The HisF subunit catalyzes the cyclization activity that produces IGP and AICAR from PRFAR using the ammonia provided by the HisH subunit. This is Imidazole glycerol phosphate synthase subunit HisF from Yersinia pseudotuberculosis serotype O:1b (strain IP 31758).